The sequence spans 158 residues: NAD(P)H-quinone oxidoreductase subunit N (158 aa).

It belongs to the complex I NdhN subunit family. NDH-1 can be composed of about 15 different subunits; different subcomplexes with different compositions have been identified which probably have different functions.

It localises to the cellular thylakoid membrane. It carries out the reaction a plastoquinone + NADH + (n+1) H(+)(in) = a plastoquinol + NAD(+) + n H(+)(out). It catalyses the reaction a plastoquinone + NADPH + (n+1) H(+)(in) = a plastoquinol + NADP(+) + n H(+)(out). NDH-1 shuttles electrons from an unknown electron donor, via FMN and iron-sulfur (Fe-S) centers, to quinones in the respiratory and/or the photosynthetic chain. The immediate electron acceptor for the enzyme in this species is believed to be plastoquinone. Couples the redox reaction to proton translocation, and thus conserves the redox energy in a proton gradient. Cyanobacterial NDH-1 also plays a role in inorganic carbon-concentration. This is NAD(P)H-quinone oxidoreductase subunit N from Prochlorococcus marinus (strain MIT 9312).